A 351-amino-acid polypeptide reads, in one-letter code: Peptide chain release factor 1 (351 aa).

Gln233 is subject to N5-methylglutamine.

Belongs to the prokaryotic/mitochondrial release factor family. In terms of processing, methylated by PrmC. Methylation increases the termination efficiency of RF1.

The protein resides in the cytoplasm. Its function is as follows. Peptide chain release factor 1 directs the termination of translation in response to the peptide chain termination codons UAG and UAA. The chain is Peptide chain release factor 1 (prfA) from Treponema pallidum (strain Nichols).